Reading from the N-terminus, the 557-residue chain is TBCC domain-containing protein 1 (557 aa).

Residues 290–435 (TTKRAKIACN…LEDHMARTGL (146 aa)) enclose the C-CAP/cofactor C-like domain.

The protein belongs to the TBCC family.

It localises to the cytoplasm. Its subcellular location is the cytoskeleton. It is found in the microtubule organizing center. The protein resides in the centrosome. The protein localises to the spindle pole. Its function is as follows. Plays a role in the regulation of centrosome and Golgi apparatus positioning, with consequences on cell shape and cell migration. The sequence is that of TBCC domain-containing protein 1 (TBCCD1) from Homo sapiens (Human).